The chain runs to 357 residues: GTPase Obg (357 aa).

In terms of domain architecture, Obg spans 1-158 (MFVDNIKLKV…LEIVLELKLI (158 aa)). In terms of domain architecture, OBG-type G spans 159 to 345 (ADVGLVGFPN…LKFALFDLVE (187 aa)). GTP-binding positions include 165-172 (GFPNAGKS), 190-194 (FTTLT), 212-215 (DIPG), 280-283 (TKCD), and 326-328 (SSV). 2 residues coordinate Mg(2+): S172 and T192.

Belongs to the TRAFAC class OBG-HflX-like GTPase superfamily. OBG GTPase family. In terms of assembly, monomer. It depends on Mg(2+) as a cofactor.

The protein resides in the cytoplasm. An essential GTPase which binds GTP, GDP and possibly (p)ppGpp with moderate affinity, with high nucleotide exchange rates and a fairly low GTP hydrolysis rate. Plays a role in control of the cell cycle, stress response, ribosome biogenesis and in those bacteria that undergo differentiation, in morphogenesis control. This Nautilia profundicola (strain ATCC BAA-1463 / DSM 18972 / AmH) protein is GTPase Obg.